Consider the following 722-residue polypeptide: Ribosomal RNA large subunit methyltransferase K/L (722 aa).

The 113-residue stretch at 55 to 167 (TGYRACLWSR…GNEGTLYLDL (113 aa)) folds into the THUMP domain.

This sequence belongs to the methyltransferase superfamily. RlmKL family.

It localises to the cytoplasm. The enzyme catalyses guanosine(2445) in 23S rRNA + S-adenosyl-L-methionine = N(2)-methylguanosine(2445) in 23S rRNA + S-adenosyl-L-homocysteine + H(+). It carries out the reaction guanosine(2069) in 23S rRNA + S-adenosyl-L-methionine = N(2)-methylguanosine(2069) in 23S rRNA + S-adenosyl-L-homocysteine + H(+). Specifically methylates the guanine in position 2445 (m2G2445) and the guanine in position 2069 (m7G2069) of 23S rRNA. This chain is Ribosomal RNA large subunit methyltransferase K/L, found in Desulfotalea psychrophila (strain LSv54 / DSM 12343).